A 101-amino-acid chain; its full sequence is NAD(P)H-quinone oxidoreductase subunit 4L, chloroplastic (101 aa).

The next 3 membrane-spanning stretches (helical) occupy residues 2–22 (ILEH…YGLI), 30–52 (ALMC…SDFF), and 61–81 (IFSI…LAIV).

It belongs to the complex I subunit 4L family. In terms of assembly, NDH is composed of at least 16 different subunits, 5 of which are encoded in the nucleus.

It is found in the plastid. The protein localises to the chloroplast thylakoid membrane. It carries out the reaction a plastoquinone + NADH + (n+1) H(+)(in) = a plastoquinol + NAD(+) + n H(+)(out). The catalysed reaction is a plastoquinone + NADPH + (n+1) H(+)(in) = a plastoquinol + NADP(+) + n H(+)(out). In terms of biological role, NDH shuttles electrons from NAD(P)H:plastoquinone, via FMN and iron-sulfur (Fe-S) centers, to quinones in the photosynthetic chain and possibly in a chloroplast respiratory chain. The immediate electron acceptor for the enzyme in this species is believed to be plastoquinone. Couples the redox reaction to proton translocation, and thus conserves the redox energy in a proton gradient. In Oenothera glazioviana (Large-flowered evening primrose), this protein is NAD(P)H-quinone oxidoreductase subunit 4L, chloroplastic.